Reading from the N-terminus, the 282-residue chain is 2-dehydro-3-deoxyphosphooctonate aldolase (282 aa).

It belongs to the KdsA family.

It localises to the cytoplasm. The enzyme catalyses D-arabinose 5-phosphate + phosphoenolpyruvate + H2O = 3-deoxy-alpha-D-manno-2-octulosonate-8-phosphate + phosphate. The protein operates within carbohydrate biosynthesis; 3-deoxy-D-manno-octulosonate biosynthesis; 3-deoxy-D-manno-octulosonate from D-ribulose 5-phosphate: step 2/3. It functions in the pathway bacterial outer membrane biogenesis; lipopolysaccharide biosynthesis. In Agrobacterium fabrum (strain C58 / ATCC 33970) (Agrobacterium tumefaciens (strain C58)), this protein is 2-dehydro-3-deoxyphosphooctonate aldolase.